A 360-amino-acid polypeptide reads, in one-letter code: G-protein coupled receptor 15 (360 aa).

The Extracellular portion of the chain corresponds to 1-33 (MDPEETSVYLDYYYATSPNPDIRETHSHVPYTS). Residues 34 to 54 (VFLPVFYTAVFLTGVLGNLVL) traverse the membrane as a helical segment. Over 55 to 69 (MGALHFKPGSRRLID) the chain is Cytoplasmic. Residues 70 to 90 (IFIINLAASDFIFLVTLPLWV) form a helical membrane-spanning segment. Residues 91–120 (DKEASLGLWRTGSFLCKGSSYMISVNMHCS) are Extracellular-facing. Residues 121–141 (VFLLTCMSVDRYLAIVCPVVS) form a helical membrane-spanning segment. The Cytoplasmic portion of the chain corresponds to 142-149 (RKFRRTDC). The helical transmembrane segment at 150 to 170 (AYVVCASIWFISCLLGLPTLL) threads the bilayer. Over 171–192 (SRELTLIDDKPYCAEKKATPLK) the chain is Extracellular. The chain crosses the membrane as a helical span at residues 193 to 213 (LIWSLVALIFTFFVPLLSIVT). Over 214–239 (CYCCIARKLCAHYQQSGKHNKKLKKS) the chain is Cytoplasmic. The helical transmembrane segment at 240 to 260 (IKIIFIVVAAFLVSWLPFNTF) threads the bilayer. Topologically, residues 261–284 (KLLAIVSGLQQERYFPSAMLQLGM) are extracellular. Residues 285–305 (EVSGPLAFANSCVNPFIYYIF) traverse the membrane as a helical segment. At 306–360 (DSYIRRAIVHCLCPCLKNYDFGSSTETSDSHLTKALSTFIHAEDFTRRRKRSVSL) the chain is on the cytoplasmic side. Ser-359 carries the post-translational modification Phosphoserine.

It belongs to the G-protein coupled receptor 1 family. As to quaternary structure, interacts with adapter YWHAE; this interaction promotes ER-to-Golgi transport of GPR15. Post-translationally, phosphorylation is necessary for YWHAE binding and efficient surface expression. O-glycosylated. Sialylated O-glycans in the N-terminal tail inhibits binding of GPR15LG. In terms of processing, sulfation is required for efficient binding of GPR15LG.

Its subcellular location is the cell membrane. In terms of biological role, g protein-coupled receptor that plays an important role in immune homeostasis. Acts via its natural ligand GPR15LG, a chemokine-like polypeptide strongly expressed in gastrointestinal tissues. GPR15-GPR15LG signaling axis regulates intestinal homeostasis and inflammation through the migration of immune cells. Controls thereby the specific homing of T-cells, particularly FOXP3+ regulatory T-cells (Tregs), to the large intestine lamina propria. Also required for skin localization of thymus-derived dendritic epidermal T-cells. Plays an important role in mediating cytoprotective function as well as angiogenesis of thrombomodulin. Mechanistically, preferentially signals through the Gi/o pathway to inhibit adenylate cyclase activity and activate a phosphatidylinositol-calcium second messenger system that regulates the release of Ca(2+) ions from intracellular stores. The sequence is that of G-protein coupled receptor 15 (GPR15) from Macaca mulatta (Rhesus macaque).